Here is a 432-residue protein sequence, read N- to C-terminus: C-type cytochrome OmcS (432 aa).

An N-terminal signal peptide occupies residues 1–25; sequence MKKGMKVSLSVAAAALLMSAPAAFA.

It depends on heme as a cofactor.

The protein localises to the cell outer membrane. Its subcellular location is the cell surface. Plays an important role in extracellular electron transfer. Can transfer electrons to insoluble Fe(3+) oxides as well as other extracellular electron acceptors, including Mn(4+) oxide and humic substances. Essential for direct interspecies electron transfer (DIET) in cocultures with G.metallireducens. The polypeptide is C-type cytochrome OmcS (Geobacter sulfurreducens (strain ATCC 51573 / DSM 12127 / PCA)).